The following is a 254-amino-acid chain: Probable triosephosphate isomerase 2 (254 aa).

Position 9-11 (9-11 (NMK)) interacts with substrate. H96 serves as the catalytic Electrophile. E168 acts as the Proton acceptor in catalysis. Positions 174 and 212 each coordinate substrate.

The protein belongs to the triosephosphate isomerase family. In terms of assembly, homodimer.

The protein localises to the cytoplasm. It carries out the reaction D-glyceraldehyde 3-phosphate = dihydroxyacetone phosphate. The protein operates within carbohydrate biosynthesis; gluconeogenesis. Its pathway is carbohydrate degradation; glycolysis; D-glyceraldehyde 3-phosphate from glycerone phosphate: step 1/1. Functionally, involved in the gluconeogenesis. Catalyzes stereospecifically the conversion of dihydroxyacetone phosphate (DHAP) to D-glyceraldehyde-3-phosphate (G3P). This Listeria monocytogenes serotype 4b (strain F2365) protein is Probable triosephosphate isomerase 2.